Here is a 377-residue protein sequence, read N- to C-terminus: Glutamate 5-kinase (377 aa).

K22 contributes to the ATP binding site. Substrate contacts are provided by S62, D149, and N161. ATP-binding positions include 181 to 182 (TD) and 223 to 229 (TGGMVTK). The PUA domain maps to 285-359 (QGTLVADSGA…GRNTAQLKRF (75 aa)).

It belongs to the glutamate 5-kinase family.

The protein localises to the cytoplasm. It catalyses the reaction L-glutamate + ATP = L-glutamyl 5-phosphate + ADP. Its pathway is amino-acid biosynthesis; L-proline biosynthesis; L-glutamate 5-semialdehyde from L-glutamate: step 1/2. Functionally, catalyzes the transfer of a phosphate group to glutamate to form L-glutamate 5-phosphate. This chain is Glutamate 5-kinase, found in Bifidobacterium adolescentis (strain ATCC 15703 / DSM 20083 / NCTC 11814 / E194a).